The sequence spans 571 residues: Urease subunit alpha (571 aa).

The Urease domain occupies 133–571 (GGIDTHVHFI…LPLTQRYFLF (439 aa)). Residues His138, His140, and Lys221 each contribute to the Ni(2+) site. Residue Lys221 is modified to N6-carboxylysine. His223 provides a ligand contact to substrate. Residues His250 and His276 each contribute to the Ni(2+) site. His324 (proton donor) is an active-site residue. Asp364 contributes to the Ni(2+) binding site.

Belongs to the metallo-dependent hydrolases superfamily. Urease alpha subunit family. Heterotrimer of UreA (gamma), UreB (beta) and UreC (alpha) subunits. Three heterotrimers associate to form the active enzyme. Requires Ni cation as cofactor. Carboxylation allows a single lysine to coordinate two nickel ions.

Its subcellular location is the cytoplasm. The catalysed reaction is urea + 2 H2O + H(+) = hydrogencarbonate + 2 NH4(+). It participates in nitrogen metabolism; urea degradation; CO(2) and NH(3) from urea (urease route): step 1/1. This chain is Urease subunit alpha, found in Staphylococcus epidermidis (strain ATCC 35984 / DSM 28319 / BCRC 17069 / CCUG 31568 / BM 3577 / RP62A).